Reading from the N-terminus, the 324-residue chain is Beta-ketoacyl-[acyl-carrier-protein] synthase III (324 aa).

Catalysis depends on residues C112 and H251. Positions 252–256 are ACP-binding; the sequence is QANIR. The active site involves N281.

The protein belongs to the thiolase-like superfamily. FabH family. Homodimer.

It is found in the cytoplasm. The catalysed reaction is malonyl-[ACP] + acetyl-CoA + H(+) = 3-oxobutanoyl-[ACP] + CO2 + CoA. Its pathway is lipid metabolism; fatty acid biosynthesis. In terms of biological role, catalyzes the condensation reaction of fatty acid synthesis by the addition to an acyl acceptor of two carbons from malonyl-ACP. Catalyzes the first condensation reaction which initiates fatty acid synthesis and may therefore play a role in governing the total rate of fatty acid production. Possesses both acetoacetyl-ACP synthase and acetyl transacylase activities. Its substrate specificity determines the biosynthesis of branched-chain and/or straight-chain of fatty acids. This Desulfotalea psychrophila (strain LSv54 / DSM 12343) protein is Beta-ketoacyl-[acyl-carrier-protein] synthase III.